The following is a 553-amino-acid chain: Pseudouridylate synthase RPUSD2 (553 aa).

Residues 76-135 form a disordered region; that stretch reads AVGKQVPESGDQAQGGEGQLPSNGEQTPAPVADSGKRKKRRGATGERVVPPPKKRRTGVS. Residue aspartate 287 is part of the active site. Threonine 490 carries the phosphothreonine modification.

This sequence belongs to the pseudouridine synthase RluA family.

The catalysed reaction is a uridine in mRNA = a pseudouridine in mRNA. Functionally, pseudouridine synthase that catalyzes pseudouridylation of mRNAs. This Mus musculus (Mouse) protein is Pseudouridylate synthase RPUSD2.